We begin with the raw amino-acid sequence, 416 residues long: CinA-like protein (416 aa).

It belongs to the CinA family.

This is CinA-like protein from Thermosynechococcus vestitus (strain NIES-2133 / IAM M-273 / BP-1).